A 407-amino-acid polypeptide reads, in one-letter code: Methylenetetrahydrofolate--tRNA-(uracil-5-)-methyltransferase TrmFO (407 aa).

9–14 (GAGLAG) serves as a coordination point for FAD.

The protein belongs to the MnmG family. TrmFO subfamily. FAD is required as a cofactor.

The protein localises to the cytoplasm. It catalyses the reaction uridine(54) in tRNA + (6R)-5,10-methylene-5,6,7,8-tetrahydrofolate + NADH + H(+) = 5-methyluridine(54) in tRNA + (6S)-5,6,7,8-tetrahydrofolate + NAD(+). It carries out the reaction uridine(54) in tRNA + (6R)-5,10-methylene-5,6,7,8-tetrahydrofolate + NADPH + H(+) = 5-methyluridine(54) in tRNA + (6S)-5,6,7,8-tetrahydrofolate + NADP(+). Its function is as follows. Catalyzes the folate-dependent formation of 5-methyl-uridine at position 54 (M-5-U54) in all tRNAs. This is Methylenetetrahydrofolate--tRNA-(uracil-5-)-methyltransferase TrmFO from Lactobacillus helveticus (strain DPC 4571).